Consider the following 48-residue polypeptide: AEDRKSLSGLTEQEAQEFGTLYTQGVAFVAVIAVVAHALVWAWRPWLQ.

Residues 1–20 are Cytoplasmic-facing; it reads AEDRKSLSGLTEQEAQEFGT. The helical transmembrane segment at 21–43 threads the bilayer; the sequence is LYTQGVAFVAVIAVVAHALVWAW. Residue H37 coordinates a bacteriochlorophyll. Topologically, residues 44 to 48 are periplasmic; it reads RPWLQ.

The protein belongs to the antenna complex beta subunit family. The core complex is formed by different alpha and beta chains, binding bacteriochlorophyll molecules, and arranged most probably in tetrameric structures disposed around the reaction center. The non-pigmented gamma chains may constitute additional components.

It is found in the cell inner membrane. In terms of biological role, antenna complexes are light-harvesting systems, which transfer the excitation energy to the reaction centers. The protein is Light-harvesting polypeptide B-885 beta-1 chain of Rhodocyclus tenuis (Rhodospirillum tenue).